Here is a 142-residue protein sequence, read N- to C-terminus: Small ribosomal subunit protein uS12 (142 aa).

The segment at 1 to 30 (MGKTRGMGAARKLKNHRRRQRWADKSYKKS) is disordered. Positions 11-20 (RKLKNHRRRQ) are enriched in basic residues. A compositionally biased stretch (basic and acidic residues) spans 21 to 30 (RWADKSYKKS). Pro61 is modified (hydroxyproline).

The protein belongs to the universal ribosomal protein uS12 family.

In Fragaria ananassa (Strawberry), this protein is Small ribosomal subunit protein uS12 (RPS23).